A 1396-amino-acid polypeptide reads, in one-letter code: Helicase ARIP4 (1396 aa).

Positions 1-103 (MSDASISGSE…LQKPANLRRN (103 aa)) are disordered. Acidic residues predominate over residues 11–49 (PELDPEDMEEEEEDDEDDDEEEEEEEDEEDNDGDDEDDK). Over residues 75-84 (RSTTSGQSGQ) the composition is skewed to polar residues. In terms of domain architecture, Helicase ATP-binding spans 290-510 (RFSGSSGFGC…WCMVDFVRPD (221 aa)). An ATP-binding site is contributed by 303–310 (HSMGLGKT). The short motif at 461 to 464 (DEGH) is the DEAH box element. An LXXLL motif 1 motif is present at residues 549 to 553 (LHSLL). Residues 717–891 (KMVLLFHLIE…RVVDDLNPEV (175 aa)) form the Helicase C-terminal domain. Disordered regions lie at residues 1117–1168 (SGKQ…PDSP) and 1194–1250 (NLGL…STMN). 2 stretches are compositionally biased toward polar residues: residues 1128 to 1148 (QATS…RHST) and 1218 to 1238 (DQSS…SYPN). Positions 1273-1277 (LPSLL) match the LXXLL motif 2 motif. Positions 1340-1396 (GLPTNNPASTFPGYLSSHSNYQASPGTSSRPLPSGETELGSCEEDGRDDDVVEVTGE) are disordered. The segment covering 1355 to 1370 (SSHSNYQASPGTSSRP) has biased composition (polar residues). Over residues 1380–1396 (SCEEDGRDDDVVEVTGE) the composition is skewed to acidic residues.

Belongs to the SNF2/RAD54 helicase family.

The protein localises to the nucleus. It carries out the reaction ATP + H2O = ADP + phosphate + H(+). Its function is as follows. DNA helicase that modulates androgen receptor (AR)-dependent transactivation in a promoter-dependent manner. The sequence is that of Helicase ARIP4 (rad54l2) from Xenopus tropicalis (Western clawed frog).